The primary structure comprises 118 residues: NADH-quinone oxidoreductase subunit A (118 aa).

Helical transmembrane passes span 5–25 (YLGI…AFAV), 61–81 (FLYA…YPWA), and 90–110 (FAIV…WYAW).

This sequence belongs to the complex I subunit 3 family. As to quaternary structure, NDH-1 is composed of 14 different subunits. Subunits NuoA, H, J, K, L, M, N constitute the membrane sector of the complex.

The protein localises to the cell membrane. It carries out the reaction a quinone + NADH + 5 H(+)(in) = a quinol + NAD(+) + 4 H(+)(out). In terms of biological role, NDH-1 shuttles electrons from NADH, via FMN and iron-sulfur (Fe-S) centers, to quinones in the respiratory chain. The immediate electron acceptor for the enzyme in this species is believed to be a menaquinone. Couples the redox reaction to proton translocation (for every two electrons transferred, four hydrogen ions are translocated across the cytoplasmic membrane), and thus conserves the redox energy in a proton gradient. This is NADH-quinone oxidoreductase subunit A from Heliobacterium modesticaldum (strain ATCC 51547 / Ice1).